A 574-amino-acid chain; its full sequence is Proline--tRNA ligase (574 aa).

This sequence belongs to the class-II aminoacyl-tRNA synthetase family. ProS type 1 subfamily. In terms of assembly, homodimer.

The protein localises to the cytoplasm. The catalysed reaction is tRNA(Pro) + L-proline + ATP = L-prolyl-tRNA(Pro) + AMP + diphosphate. Its function is as follows. Catalyzes the attachment of proline to tRNA(Pro) in a two-step reaction: proline is first activated by ATP to form Pro-AMP and then transferred to the acceptor end of tRNA(Pro). As ProRS can inadvertently accommodate and process non-cognate amino acids such as alanine and cysteine, to avoid such errors it has two additional distinct editing activities against alanine. One activity is designated as 'pretransfer' editing and involves the tRNA(Pro)-independent hydrolysis of activated Ala-AMP. The other activity is designated 'posttransfer' editing and involves deacylation of mischarged Ala-tRNA(Pro). The misacylated Cys-tRNA(Pro) is not edited by ProRS. This is Proline--tRNA ligase from Anaeromyxobacter sp. (strain K).